A 246-amino-acid chain; its full sequence is UDP-N-acetyl-D-mannosaminuronic acid transferase (246 aa).

This sequence belongs to the glycosyltransferase 26 family.

The catalysed reaction is UDP-N-acetyl-alpha-D-mannosaminouronate + N-acetyl-alpha-D-glucosaminyl-di-trans,octa-cis-undecaprenyl diphosphate = beta-D-ManNAcA-(1-&gt;4)-alpha-D-GlcNAc-di-trans,octa-cis-undecaprenyl diphosphate + UDP + H(+). The protein operates within bacterial outer membrane biogenesis; enterobacterial common antigen biosynthesis. Its function is as follows. Catalyzes the synthesis of Und-PP-GlcNAc-ManNAcA (Lipid II), the second lipid-linked intermediate involved in enterobacterial common antigen (ECA) synthesis. This chain is UDP-N-acetyl-D-mannosaminuronic acid transferase, found in Yersinia pestis bv. Antiqua (strain Antiqua).